A 210-amino-acid chain; its full sequence is MTDETTKNGPDATAADAAADAAAYVENDTVQEETAQPDPLELLKAENSELRDRYLRLAAEMDNLRRRTEREVKDAKSYSVAGFARDMLAVSDNLRRALDAISPEAKATADAGLTSLIEGVEMTERAMLSALERHGVRKLEPVGQKFDPNFHQAMFEVPNSEVPNNTVVQVVQAGFTIGERVLRPAMVGVAKGGPKPAEAETNSVFDEKDA.

A disordered region spans residues 191-210 (KGGPKPAEAETNSVFDEKDA).

Belongs to the GrpE family. In terms of assembly, homodimer.

It is found in the cytoplasm. Its function is as follows. Participates actively in the response to hyperosmotic and heat shock by preventing the aggregation of stress-denatured proteins, in association with DnaK and GrpE. It is the nucleotide exchange factor for DnaK and may function as a thermosensor. Unfolded proteins bind initially to DnaJ; upon interaction with the DnaJ-bound protein, DnaK hydrolyzes its bound ATP, resulting in the formation of a stable complex. GrpE releases ADP from DnaK; ATP binding to DnaK triggers the release of the substrate protein, thus completing the reaction cycle. Several rounds of ATP-dependent interactions between DnaJ, DnaK and GrpE are required for fully efficient folding. The polypeptide is Protein GrpE (Rhizobium etli (strain CIAT 652)).